A 95-amino-acid chain; its full sequence is Pyrimidine/purine nucleoside phosphorylase (95 aa).

It belongs to the nucleoside phosphorylase PpnP family.

The enzyme catalyses a purine D-ribonucleoside + phosphate = a purine nucleobase + alpha-D-ribose 1-phosphate. It carries out the reaction adenosine + phosphate = alpha-D-ribose 1-phosphate + adenine. The catalysed reaction is cytidine + phosphate = cytosine + alpha-D-ribose 1-phosphate. It catalyses the reaction guanosine + phosphate = alpha-D-ribose 1-phosphate + guanine. The enzyme catalyses inosine + phosphate = alpha-D-ribose 1-phosphate + hypoxanthine. It carries out the reaction thymidine + phosphate = 2-deoxy-alpha-D-ribose 1-phosphate + thymine. The catalysed reaction is uridine + phosphate = alpha-D-ribose 1-phosphate + uracil. It catalyses the reaction xanthosine + phosphate = alpha-D-ribose 1-phosphate + xanthine. Functionally, catalyzes the phosphorolysis of diverse nucleosides, yielding D-ribose 1-phosphate and the respective free bases. Can use uridine, adenosine, guanosine, cytidine, thymidine, inosine and xanthosine as substrates. Also catalyzes the reverse reactions. This Enterobacter sp. (strain 638) protein is Pyrimidine/purine nucleoside phosphorylase.